A 54-amino-acid polypeptide reads, in one-letter code: Ovomucoid (54 aa).

Residues V4–C54 form the Kazal-like domain. 3 disulfides stabilise this stretch: C6–C36, C14–C33, and C22–C54. N43 carries N-linked (GlcNAc...) asparagine glycosylation.

Its subcellular location is the secreted. The polypeptide is Ovomucoid (Coloeus monedula (Eurasian jackdaw)).